The primary structure comprises 378 residues: Lipid-A-disaccharide synthase (378 aa).

The protein belongs to the LpxB family.

It carries out the reaction a lipid X + a UDP-2-N,3-O-bis[(3R)-3-hydroxyacyl]-alpha-D-glucosamine = a lipid A disaccharide + UDP + H(+). It functions in the pathway bacterial outer membrane biogenesis; LPS lipid A biosynthesis. Condensation of UDP-2,3-diacylglucosamine and 2,3-diacylglucosamine-1-phosphate to form lipid A disaccharide, a precursor of lipid A, a phosphorylated glycolipid that anchors the lipopolysaccharide to the outer membrane of the cell. The polypeptide is Lipid-A-disaccharide synthase (Pseudomonas aeruginosa (strain UCBPP-PA14)).